We begin with the raw amino-acid sequence, 635 residues long: Threonine--tRNA ligase (635 aa).

A TGS domain is found at 1 to 58 (MIQVTCDQKNYEVLEGTTAAELAKQLKNSHQFIGVLINERPRDLSTHLNEGDTLVFLT). The interval 237–528 (DHRVLGAKLD…LIENFKGRFP (292 aa)) is catalytic. Zn(2+) contacts are provided by Cys328, His379, and His505.

The protein belongs to the class-II aminoacyl-tRNA synthetase family. In terms of assembly, homodimer. Zn(2+) serves as cofactor.

The protein localises to the cytoplasm. The catalysed reaction is tRNA(Thr) + L-threonine + ATP = L-threonyl-tRNA(Thr) + AMP + diphosphate + H(+). Functionally, catalyzes the attachment of threonine to tRNA(Thr) in a two-step reaction: L-threonine is first activated by ATP to form Thr-AMP and then transferred to the acceptor end of tRNA(Thr). Also edits incorrectly charged L-seryl-tRNA(Thr). The sequence is that of Threonine--tRNA ligase from Chlamydia pneumoniae (Chlamydophila pneumoniae).